A 1183-amino-acid polypeptide reads, in one-letter code: DNA-directed RNA polymerase subunit beta (1183 aa).

Residues 1151–1162 show a composition bias toward acidic residues; it reads EIEMADVDDEDA. Residues 1151-1183 are disordered; sequence EIEMADVDDEDAAERKVDLQQKSAPESQKETTD.

This sequence belongs to the RNA polymerase beta chain family. The RNAP catalytic core consists of 2 alpha, 1 beta, 1 beta' and 1 omega subunit. When a sigma factor is associated with the core the holoenzyme is formed, which can initiate transcription.

It carries out the reaction RNA(n) + a ribonucleoside 5'-triphosphate = RNA(n+1) + diphosphate. Its function is as follows. DNA-dependent RNA polymerase catalyzes the transcription of DNA into RNA using the four ribonucleoside triphosphates as substrates. This is DNA-directed RNA polymerase subunit beta from Staphylococcus epidermidis (strain ATCC 12228 / FDA PCI 1200).